We begin with the raw amino-acid sequence, 206 residues long: uncharacterized protein (206 aa).

The protein resides in the plastid. It is found in the cyanelle. This is an uncharacterized protein from Cyanophora paradoxa.